Reading from the N-terminus, the 433-residue chain is Pyroglutamylated RF-amide peptide receptor (433 aa).

At 1–46 the chain is on the extracellular side; the sequence is MQALNITAEQFSRLLSAHNLTREQFIHRYGLRPLVYTPELPARAKV. 2 N-linked (GlcNAc...) asparagine glycosylation sites follow: asparagine 5 and asparagine 19. The chain crosses the membrane as a helical span at residues 47-67; sequence AFALAGALIFALALFGNSLVI. The Cytoplasmic segment spans residues 68–81; sequence YVVTRSKAMRTVTN. The chain crosses the membrane as a helical span at residues 82 to 102; that stretch reads IFICSLALSDLLIAFFCIPVT. The Extracellular segment spans residues 103–120; it reads MLQNISDKWLGGAFICKM. The chain crosses the membrane as a helical span at residues 121–141; that stretch reads VPFVQSTAVVTEILTMTCIAV. Topologically, residues 142–162 are cytoplasmic; sequence ERHQGLVHPFKMKWQYTTRRA. The helical transmembrane segment at 163–183 threads the bilayer; sequence FTILGVVWLAAIIVGSPMWHV. At 184 to 212 the chain is on the extracellular side; it reads QRLEIKYDFLYEKEHICCLEEWASPVHQR. The chain crosses the membrane as a helical span at residues 213 to 233; that stretch reads IYSTFILVILFLLPLVVMLVL. Over 234-271 the chain is Cytoplasmic; that stretch reads YSKIGYELWIKKRVGDSSALQTIHGKEMSKIARKKKRA. Residues 272–292 form a helical membrane-spanning segment; sequence VIMMVTVVALFAACWAPFHVV. The Extracellular portion of the chain corresponds to 293–313; that stretch reads HMMVEYSNFEKEYDDVTIKMV. Residues 314-334 traverse the membrane as a helical segment; the sequence is FAVAQTIGFFNSICNPFVYAF. Topologically, residues 335–433 are cytoplasmic; that stretch reads MNENFKKNFL…NSTFGSGHEL (99 aa). The disordered stretch occupies residues 356 to 389; that stretch reads SSPARKPGNSGISMMQKRAKLSRPQRPVEETKGD.

It belongs to the G-protein coupled receptor 1 family. Highly expressed in the adrenal gland and at moderate levels in the eye and testis. Expressed widely in the brain with high levels in the hypothalamus and moderate levels in the amygdala, basal forebrain, cortex, medulla oblongata, midbrain and thalamus.

Its subcellular location is the cell membrane. Its function is as follows. Receptor for the orexigenic neuropeptide QRFP. The activity of this receptor is mediated by G proteins that modulate adenylate cyclase activity and intracellular calcium levels. This chain is Pyroglutamylated RF-amide peptide receptor (Qrfpr), found in Rattus norvegicus (Rat).